The chain runs to 418 residues: Glutamyl-tRNA reductase (418 aa).

Substrate is bound by residues 49–52 (TCNR), S108, 113–115 (EPQ), and Q119. Residue C50 is the Nucleophile of the active site. 188 to 193 (GAGETI) serves as a coordination point for NADP(+).

The protein belongs to the glutamyl-tRNA reductase family. In terms of assembly, homodimer.

It catalyses the reaction (S)-4-amino-5-oxopentanoate + tRNA(Glu) + NADP(+) = L-glutamyl-tRNA(Glu) + NADPH + H(+). Its pathway is porphyrin-containing compound metabolism; protoporphyrin-IX biosynthesis; 5-aminolevulinate from L-glutamyl-tRNA(Glu): step 1/2. In terms of biological role, catalyzes the NADPH-dependent reduction of glutamyl-tRNA(Glu) to glutamate 1-semialdehyde (GSA). The polypeptide is Glutamyl-tRNA reductase (Aliivibrio fischeri (strain MJ11) (Vibrio fischeri)).